Reading from the N-terminus, the 232-residue chain is Ribose-5-phosphate isomerase A (232 aa).

Residues 28–31 (TGST), 83–86 (DGAD), and 96–99 (KGGG) contribute to the substrate site. Catalysis depends on Glu-105, which acts as the Proton acceptor. Substrate is bound at residue Lys-123.

The protein belongs to the ribose 5-phosphate isomerase family. As to quaternary structure, homodimer.

It catalyses the reaction aldehydo-D-ribose 5-phosphate = D-ribulose 5-phosphate. The protein operates within carbohydrate degradation; pentose phosphate pathway; D-ribose 5-phosphate from D-ribulose 5-phosphate (non-oxidative stage): step 1/1. Catalyzes the reversible conversion of ribose-5-phosphate to ribulose 5-phosphate. The sequence is that of Ribose-5-phosphate isomerase A from Allorhizobium ampelinum (strain ATCC BAA-846 / DSM 112012 / S4) (Agrobacterium vitis (strain S4)).